Consider the following 424-residue polypeptide: Protein FAM43A (424 aa).

The segment covering 261–297 has biased composition (acidic residues); it reads QQEEELQEEEEEHLEDCLEEEEEEDGVGDGDPAEEEA. Disordered regions lie at residues 261–299 and 382–424; these read QQEEELQEEEEEHLEDCLEEEEEEDGVGDGDPAEEEAEA and LLSG…PYSG. Over residues 382–394 the composition is skewed to low complexity; that stretch reads LLSGESTGSESSI. Over residues 405-418 the composition is skewed to polar residues; sequence SPGNPSGPADSTSL.

This sequence belongs to the FAM43 family.

The polypeptide is Protein FAM43A (Fam43a) (Mus musculus (Mouse)).